The sequence spans 120 residues: V-type proton ATPase subunit F (120 aa).

It belongs to the V-ATPase F subunit family. In terms of assembly, V-ATPase is a heteromultimeric enzyme composed of a peripheral catalytic V1 complex (components A to H) attached to an integral membrane V0 proton pore complex (components: a, c, c', c'' and d).

In terms of biological role, subunit of the peripheral V1 complex of vacuolar ATPase essential for assembly or catalytic function. V-ATPase is responsible for acidifying a variety of intracellular compartments in eukaryotic cells. This is V-type proton ATPase subunit F (vatF) from Dictyostelium discoideum (Social amoeba).